A 180-amino-acid chain; its full sequence is Adenine phosphoribosyltransferase (180 aa).

Alanine 2 carries the N-acetylalanine modification. Phosphoserine occurs at positions 15 and 30. The residue at position 60 (tyrosine 60) is a Phosphotyrosine. Serine 66 is modified (phosphoserine). Lysine 114 is subject to N6-acetyllysine. Residue threonine 135 is modified to Phosphothreonine.

The protein belongs to the purine/pyrimidine phosphoribosyltransferase family. In terms of assembly, homodimer.

The protein localises to the cytoplasm. The catalysed reaction is AMP + diphosphate = 5-phospho-alpha-D-ribose 1-diphosphate + adenine. The protein operates within purine metabolism; AMP biosynthesis via salvage pathway; AMP from adenine: step 1/1. In terms of biological role, catalyzes a salvage reaction resulting in the formation of AMP, that is energically less costly than de novo synthesis. In Dipodillus campestris (North African gerbil), this protein is Adenine phosphoribosyltransferase.